Consider the following 251-residue polypeptide: 3-deoxy-manno-octulosonate cytidylyltransferase (251 aa).

Belongs to the KdsB family.

The protein resides in the cytoplasm. The enzyme catalyses 3-deoxy-alpha-D-manno-oct-2-ulosonate + CTP = CMP-3-deoxy-beta-D-manno-octulosonate + diphosphate. The protein operates within nucleotide-sugar biosynthesis; CMP-3-deoxy-D-manno-octulosonate biosynthesis; CMP-3-deoxy-D-manno-octulosonate from 3-deoxy-D-manno-octulosonate and CTP: step 1/1. It participates in bacterial outer membrane biogenesis; lipopolysaccharide biosynthesis. Activates KDO (a required 8-carbon sugar) for incorporation into bacterial lipopolysaccharide in Gram-negative bacteria. The polypeptide is 3-deoxy-manno-octulosonate cytidylyltransferase (Agrobacterium fabrum (strain C58 / ATCC 33970) (Agrobacterium tumefaciens (strain C58))).